A 445-amino-acid polypeptide reads, in one-letter code: Dolichyl-diphosphooligosaccharide--protein glycosyltransferase 48 kDa subunit (445 aa).

Residues 1–32 (MRRRRKMEAGAAARAWSLLWLLLPLLGPVCAS) form the signal peptide. The Lumenal portion of the chain corresponds to 33-415 (GPRTLVLLDN…QYERFIPSAY (383 aa)). A helical transmembrane segment spans residues 416–436 (PYYASAFSMMLGLFIFSTVFL). The Cytoplasmic segment spans residues 437-445 (HMKEKEKSD).

This sequence belongs to the DDOST 48 kDa subunit family. Component of the oligosaccharyltransferase (OST) complex. OST exists in two different complex forms which contain common core subunits RPN1, RPN2, OST48, OST4, DAD1 and TMEM258, either STT3A or STT3B as catalytic subunits, and form-specific accessory subunits. STT3A complex assembly occurs through the formation of 3 subcomplexes. Subcomplex 1 contains RPN1 and TMEM258, subcomplex 2 contains the STT3A-specific subunits STT3A, DC2/OSTC, and KCP2 as well as the core subunit OST4, and subcomplex 3 contains RPN2, DAD1, and OST48. The STT3A complex can form stable complexes with the Sec61 complex or with both the Sec61 and TRAP complexes. Interacts with SMIM22.

It is found in the endoplasmic reticulum. Its subcellular location is the endoplasmic reticulum membrane. The protein operates within protein modification; protein glycosylation. In terms of biological role, subunit of the oligosaccharyl transferase (OST) complex that catalyzes the initial transfer of a defined glycan (Glc(3)Man(9)GlcNAc(2) in eukaryotes) from the lipid carrier dolichol-pyrophosphate to an asparagine residue within an Asn-X-Ser/Thr consensus motif in nascent polypeptide chains, the first step in protein N-glycosylation. N-glycosylation occurs cotranslationally and the complex associates with the Sec61 complex at the channel-forming translocon complex that mediates protein translocation across the endoplasmic reticulum (ER). All subunits are required for a maximal enzyme activity. Required for the assembly of both SST3A- and SS3B-containing OST complexes. In Canis lupus familiaris (Dog), this protein is Dolichyl-diphosphooligosaccharide--protein glycosyltransferase 48 kDa subunit.